A 1025-amino-acid chain; its full sequence is Myosin phosphatase Rho-interacting protein (1025 aa).

The segment at serine 2–threonine 383 is interaction with F-actin. The region spanning lysine 43–arginine 150 is the PH 1 domain. Disordered regions lie at residues asparagine 152–glutamine 302 and histidine 317–threonine 383. Over residues serine 179–serine 189 the composition is skewed to low complexity. Residues serine 192, serine 217, serine 218, serine 220, serine 224, and serine 226 each carry the phosphoserine modification. Positions serine 217–leucine 236 are enriched in low complexity. Residues proline 239–valine 263 are compositionally biased toward basic and acidic residues. Phosphoserine occurs at positions 265 and 269. Over residues glutamate 271–glutamate 281 the composition is skewed to basic and acidic residues. A compositionally biased stretch (pro residues) spans leucine 284–serine 294. A phosphoserine mark is found at serine 289 and serine 292. Threonine 295 carries the post-translational modification Phosphothreonine. A Phosphoserine modification is found at serine 326. The segment covering arginine 332–threonine 348 has biased composition (basic and acidic residues). Phosphothreonine is present on threonine 348. Phosphoserine occurs at positions 362 and 365. In terms of domain architecture, PH 2 spans leucine 387–histidine 483. Disordered stretches follow at residues threonine 485–tryptophan 545 and valine 560–glutamate 591. At serine 493 the chain carries Phosphoserine. Composition is skewed to basic and acidic residues over residues proline 524–tryptophan 545 and aspartate 567–arginine 589. Residues alanine 546–serine 824 form an interaction with RHOA region. A Phosphoserine modification is found at serine 619. Threonine 646 carries the post-translational modification Phosphothreonine. 2 positions are modified to phosphoserine: serine 663 and serine 800. A coiled-coil region spans residues histidine 673–serine 977. The tract at residues serine 824–leucine 879 is interaction with PPP1R12A. A phosphoserine mark is found at serine 891, serine 977, serine 993, serine 1014, and serine 1016.

Binds F-actin through its N-terminus. Interacts with MYZAP. Binds RHOA, PPP1R12A/MBS and PPP1R12C/MBS85 through adjacent coiled coil domains.

It is found in the cytoplasm. It localises to the cytoskeleton. In terms of biological role, targets myosin phosphatase to the actin cytoskeleton. Required for the regulation of the actin cytoskeleton by RhoA and ROCK1. Depletion leads to an increased number of stress fibers in smooth muscle cells through stabilization of actin fibers by phosphorylated myosin. Overexpression of MRIP as well as its F-actin-binding region leads to disassembly of stress fibers in neuronal cells. This chain is Myosin phosphatase Rho-interacting protein (MPRIP), found in Homo sapiens (Human).